The primary structure comprises 425 residues: UPF0597 protein Moth_1414 (425 aa).

This sequence belongs to the UPF0597 family.

The polypeptide is UPF0597 protein Moth_1414 (Moorella thermoacetica (strain ATCC 39073 / JCM 9320)).